Here is a 364-residue protein sequence, read N- to C-terminus: UDP-3-O-acylglucosamine N-acyltransferase (364 aa).

The active-site Proton acceptor is H258.

This sequence belongs to the transferase hexapeptide repeat family. LpxD subfamily. As to quaternary structure, homotrimer.

The enzyme catalyses a UDP-3-O-[(3R)-3-hydroxyacyl]-alpha-D-glucosamine + a (3R)-hydroxyacyl-[ACP] = a UDP-2-N,3-O-bis[(3R)-3-hydroxyacyl]-alpha-D-glucosamine + holo-[ACP] + H(+). It participates in bacterial outer membrane biogenesis; LPS lipid A biosynthesis. Its function is as follows. Catalyzes the N-acylation of UDP-3-O-acylglucosamine using 3-hydroxyacyl-ACP as the acyl donor. Is involved in the biosynthesis of lipid A, a phosphorylated glycolipid that anchors the lipopolysaccharide to the outer membrane of the cell. This Burkholderia orbicola (strain AU 1054) protein is UDP-3-O-acylglucosamine N-acyltransferase.